The primary structure comprises 157 residues: Aspartate carbamoyltransferase regulatory chain (157 aa).

4 residues coordinate Zn(2+): C108, C113, C138, and C141.

It belongs to the PyrI family. Contains catalytic and regulatory chains. Zn(2+) serves as cofactor.

Functionally, involved in allosteric regulation of aspartate carbamoyltransferase. The protein is Aspartate carbamoyltransferase regulatory chain of Ignicoccus hospitalis (strain KIN4/I / DSM 18386 / JCM 14125).